Here is a 678-residue protein sequence, read N- to C-terminus: RNA helicase NPH-II (678 aa).

Residues F175–H351 form the Helicase ATP-binding domain. G188 to T195 serves as a coordination point for ATP. Positions D300–H303 match the DEXH box motif. Residues S371–L546 enclose the Helicase C-terminal domain.

Belongs to the DEAD box helicase family. DEAH subfamily. In terms of assembly, monomer.

It localises to the virion. It carries out the reaction ATP + H2O = ADP + phosphate + H(+). NTP-dependent helicase that catalyzes unidirectional unwinding of 3'tailed duplex RNAs and plays an important role during transcription of early mRNAs, presumably by preventing R-loop formation behind the elongating RNA polymerase. Might also play a role in the export of newly synthesized mRNA chains out of the core into the cytoplasm. Required for replication and propagation of viral particles. The chain is RNA helicase NPH-II (OPG084) from Oryctolagus cuniculus (Rabbit).